The sequence spans 331 residues: Lipoyl synthase (331 aa).

Residues Cys57, Cys62, Cys68, Cys83, Cys87, Cys90, and Ser294 each coordinate [4Fe-4S] cluster. The Radical SAM core domain maps to 69-283 (WEDREATFLI…KAEAEAIGFL (215 aa)).

This sequence belongs to the radical SAM superfamily. Lipoyl synthase family. The cofactor is [4Fe-4S] cluster.

It is found in the cytoplasm. It carries out the reaction [[Fe-S] cluster scaffold protein carrying a second [4Fe-4S](2+) cluster] + N(6)-octanoyl-L-lysyl-[protein] + 2 oxidized [2Fe-2S]-[ferredoxin] + 2 S-adenosyl-L-methionine + 4 H(+) = [[Fe-S] cluster scaffold protein] + N(6)-[(R)-dihydrolipoyl]-L-lysyl-[protein] + 4 Fe(3+) + 2 hydrogen sulfide + 2 5'-deoxyadenosine + 2 L-methionine + 2 reduced [2Fe-2S]-[ferredoxin]. The protein operates within protein modification; protein lipoylation via endogenous pathway; protein N(6)-(lipoyl)lysine from octanoyl-[acyl-carrier-protein]: step 2/2. Catalyzes the radical-mediated insertion of two sulfur atoms into the C-6 and C-8 positions of the octanoyl moiety bound to the lipoyl domains of lipoate-dependent enzymes, thereby converting the octanoylated domains into lipoylated derivatives. In Clavibacter michiganensis subsp. michiganensis (strain NCPPB 382), this protein is Lipoyl synthase.